Reading from the N-terminus, the 450-residue chain is Phosphoglucosamine mutase (450 aa).

Residue Ser102 is the Phosphoserine intermediate of the active site. Mg(2+) contacts are provided by Ser102, Asp243, Asp245, and Asp247. The residue at position 102 (Ser102) is a Phosphoserine.

The protein belongs to the phosphohexose mutase family. Requires Mg(2+) as cofactor. Post-translationally, activated by phosphorylation.

The enzyme catalyses alpha-D-glucosamine 1-phosphate = D-glucosamine 6-phosphate. Functionally, catalyzes the conversion of glucosamine-6-phosphate to glucosamine-1-phosphate. In Rhizobium leguminosarum bv. trifolii (strain WSM2304), this protein is Phosphoglucosamine mutase.